The chain runs to 65 residues: UPF0434 protein BRADO0313 (65 aa).

The protein belongs to the UPF0434 family.

This is UPF0434 protein BRADO0313 from Bradyrhizobium sp. (strain ORS 278).